A 134-amino-acid chain; its full sequence is Global transcriptional regulator Spx (134 aa).

A disulfide bond links cysteine 10 and cysteine 13.

The protein belongs to the ArsC family. Spx subfamily. In terms of assembly, interacts with the C-terminal domain of the alpha subunit of the RNAP.

It localises to the cytoplasm. Its function is as follows. Global transcriptional regulator that plays a key role in stress response and exerts either positive or negative regulation of genes. Acts by interacting with the C-terminal domain of the alpha subunit of the RNA polymerase (RNAP). This interaction can enhance binding of RNAP to the promoter region of target genes and stimulate their transcription, or block interaction of RNAP with activator. The chain is Global transcriptional regulator Spx from Streptococcus pyogenes serotype M6 (strain ATCC BAA-946 / MGAS10394).